The chain runs to 101 residues: Urease subunit beta (101 aa).

The protein belongs to the urease beta subunit family. Heterotrimer of UreA (gamma), UreB (beta) and UreC (alpha) subunits. Three heterotrimers associate to form the active enzyme.

Its subcellular location is the cytoplasm. It catalyses the reaction urea + 2 H2O + H(+) = hydrogencarbonate + 2 NH4(+). The protein operates within nitrogen metabolism; urea degradation; CO(2) and NH(3) from urea (urease route): step 1/1. In Pseudomonas syringae pv. syringae (strain B728a), this protein is Urease subunit beta.